The sequence spans 365 residues: Chorismate synthase (365 aa).

Arg46 is an NADP(+) binding site. Residues 123-125, 241-242, Gly281, 296-300, and Arg322 contribute to the FMN site; these read RSS, NG, and KPTPS.

This sequence belongs to the chorismate synthase family. Homotetramer. FMNH2 serves as cofactor.

It catalyses the reaction 5-O-(1-carboxyvinyl)-3-phosphoshikimate = chorismate + phosphate. The protein operates within metabolic intermediate biosynthesis; chorismate biosynthesis; chorismate from D-erythrose 4-phosphate and phosphoenolpyruvate: step 7/7. Its function is as follows. Catalyzes the anti-1,4-elimination of the C-3 phosphate and the C-6 proR hydrogen from 5-enolpyruvylshikimate-3-phosphate (EPSP) to yield chorismate, which is the branch point compound that serves as the starting substrate for the three terminal pathways of aromatic amino acid biosynthesis. This reaction introduces a second double bond into the aromatic ring system. In Helicobacter pylori (strain ATCC 700392 / 26695) (Campylobacter pylori), this protein is Chorismate synthase.